The chain runs to 370 residues: Actin-related protein 2/3 complex subunit 1A (370 aa).

WD repeat units follow at residues 6 to 45 (FLLEPITCHAWNRDRTQIALSPNNHEVHIYKKNGSQWTKA), 50 to 89 (EHNGHITGIDWAPKSDRIVTCGADRNAYVWSQKDGIWKPT), 140 to 179 (PIRSTVLSLDWHPNNVLLAAGSCDFKCRVFSAYIKEVDEK), 202 to 241 (GTGGWVHGVSFSASGNRLAWVSHDSTVSVADASKSVQVST), 244 to 284 (TEFL…TFVS), and 322 to 365 (LHQN…SSIQ).

The protein belongs to the WD repeat ARPC1 family. Probable component of the Arp2/3 complex in which it may replace ARPC1B.

It localises to the cytoplasm. The protein resides in the cytoskeleton. Its subcellular location is the nucleus. Its function is as follows. Probably functions as a component of the Arp2/3 complex which is involved in regulation of actin polymerization and together with an activating nucleation-promoting factor (NPF) mediates the formation of branched actin networks. In addition to its role in the cytoplasmic cytoskeleton, the Arp2/3 complex also promotes actin polymerization in the nucleus, thereby regulating gene transcription and repair of damaged DNA. This chain is Actin-related protein 2/3 complex subunit 1A (Arpc1a), found in Mus musculus (Mouse).